The chain runs to 323 residues: ADP-ribose glycohydrolase MACROD1 (323 aa).

N6-succinyllysine occurs at positions 94, 101, and 127. Lys-136 is covalently cross-linked (Glycyl lysine isopeptide (Lys-Gly) (interchain with G-Cter in SUMO2)). A Macro domain is found at 139–320 (DPKYKKDKQL…IYRERLPHYF (182 aa)). 157–159 (GDI) serves as a coordination point for substrate. N6-acetyllysine is present on Lys-161. Substrate-binding positions include 170–172 (AAN), 177–182 (GGGGVD), 265–271 (ISTGVFG), and Phe-304.

Belongs to the MacroD-type family. MacroD1/2-like subfamily. Interacts with ESR1; Interacts in a manner that is estrogen independent but is enhanced by estrogen. Interacts (via macro domain) with AR.

Its subcellular location is the nucleus. The enzyme catalyses 3''-O-acetyl-ADP-D-ribose + H2O = ADP-D-ribose + acetate + H(+). It carries out the reaction 2''-O-acetyl-ADP-D-ribose + H2O = ADP-D-ribose + acetate + H(+). It catalyses the reaction 4-O-(ADP-D-ribosyl)-L-aspartyl-[protein] + H2O = L-aspartyl-[protein] + ADP-D-ribose + H(+). The catalysed reaction is 5-O-(ADP-D-ribosyl)-L-glutamyl-[protein] + H2O = L-glutamyl-[protein] + ADP-D-ribose + H(+). The enzyme catalyses alpha-NAD(+) + H2O = ADP-D-ribose + nicotinamide + H(+). Subject to competitive inhibition by the product ADP-ribose. In terms of biological role, removes ADP-ribose from aspartate and glutamate residues in proteins bearing a single ADP-ribose moiety. Inactive towards proteins bearing poly-ADP-ribose. Deacetylates O-acetyl-ADP ribose, a signaling molecule generated by the deacetylation of acetylated lysine residues in histones and other proteins. Plays a role in estrogen signaling. Binds to androgen receptor (AR) and amplifies the transactivation function of AR in response to androgen. May play an important role in carcinogenesis and/or progression of hormone-dependent cancers by feed-forward mechanism that activates ESR1 transactivation. Could be an ESR1 coactivator, providing a positive feedback regulatory loop for ESR1 signal transduction. Could be involved in invasive growth by down-regulating CDH1 in endometrial cancer cells. Enhances ESR1-mediated transcription activity. The sequence is that of ADP-ribose glycohydrolase MACROD1 from Mus musculus (Mouse).